Consider the following 564-residue polypeptide: 5-hydroxytryptamine receptor 1 (564 aa).

The interval 1–26 (MALSGQDWRRHQSHRQHRNHRTQGNH) is disordered. A compositionally biased stretch (basic residues) spans 11 to 23 (HQSHRQHRNHRTQ). A helical membrane pass occupies residues 29-51 (LISTATLTLFVLFLSSWIAYAAG). 9 consecutive repeat copies span residues 89–90 (GS), 91–92 (GS), 93–94 (GS), 95–96 (GS), 97–98 (GS), 99–100 (GS), 101–102 (GS), 103–104 (GS), and 105–106 (GS). The tract at residues 89 to 106 (GSGSGSGSGSGSGSGSGS) is 9 X 2 AA tandem repeats of G-S. The chain crosses the membrane as a helical span at residues 165–188 (VSIVLLIVILGTVVGNVLVCIAVC). Topologically, residues 189–198 (MVRKLRRPCN) are cytoplasmic. The chain crosses the membrane as a helical span at residues 199–222 (YLLVSLALSDLCVALLVMPMALLY). The Extracellular portion of the chain corresponds to 223–236 (EVLEKWNFGPLLCD). A disulfide bridge connects residues Cys235 and Cys314. A helical transmembrane segment spans residues 237-258 (IWVSFDVLCCTASILNLCAISV). Residues 238 to 247 (WVSFDVLCCT) are agonist binding. Residues Asp242 and Thr247 each contribute to the ergotamine site. Positions 259–261 (DRY) match the DRY motif; important for ligand-induced conformation changes motif. The Cytoplasmic portion of the chain corresponds to 259–278 (DRYLAITKPLEYGVKRTPRR). A helical transmembrane segment spans residues 279–302 (MMLCVGIVWLAAACISLPPLLILG). Topologically, residues 303-330 (NEHEDEEGQPICTVCQNFAYQIYATLGS) are extracellular. A helical transmembrane segment spans residues 331 to 353 (FYIPLSVMLFVYYQIFRAARRIV). At 354–454 (LEEKRAQTHL…QLAKEKKAST (101 aa)) the chain is on the cytoplasmic side. Positions 367–396 (LNGTGSPSAPQAPPLGHTELASSGNGQRHS) are disordered. Residues 386-396 (LASSGNGQRHS) are compositionally biased toward polar residues. The chain crosses the membrane as a helical span at residues 455 to 476 (TLGIIMSAFTVCWLPFFILALI). The Extracellular segment spans residues 477-487 (RPFETMHVPAS). Residues 488-510 (LSSLFLWLGYANSLLNPIIYATL) traverse the membrane as a helical segment. The NPxxY motif; important for ligand-induced conformation changes and signaling motif lies at 503–507 (NPIIY). Residues 511–564 (NRDFRKPFQEILYFRCSSLNTMMRENYYQDQYGEPPSQRVMLGDERHGARESFL) are Cytoplasmic-facing.

It belongs to the G-protein coupled receptor 1 family. 5-hydroxytryptamine receptor subfamily. As to expression, expressed predominantly in adult heads.

It localises to the cell membrane. G-protein coupled receptor for 5-hydroxytryptamine (serotonin). Also functions as a receptor for various alkaloids. Ligand binding causes a conformation change that triggers signaling via guanine nucleotide-binding proteins (G proteins) and modulates the activity of down-stream effectors, such as adenylate cyclase. Signaling activates adenylate cyclase activity. The protein is 5-hydroxytryptamine receptor 1 (5-HT7) of Drosophila melanogaster (Fruit fly).